Reading from the N-terminus, the 286-residue chain is Protein NipSnap homolog 2 (286 aa).

A mitochondrion-targeting transit peptide spans 1 to 40 (MATRVLHSSCSGLYRAAGPARGKGHATAVIRSLSASHNRP).

The protein belongs to the NipSnap family.

Its subcellular location is the mitochondrion matrix. Its function is as follows. Protein involved in mitophagy. Accumulates on the mitochondria surface in response to mitochondrial depolarization and acts as a 'eat me' signal by recruiting proteins involved in selective autophagy. In Danio rerio (Zebrafish), this protein is Protein NipSnap homolog 2 (nipsnap2).